The following is a 377-amino-acid chain: Chaperone protein DnaJ (377 aa).

Residues 5–70 enclose the J domain; the sequence is DYYELLGLQK…EKKAKYDQFG (66 aa). The CR-type zinc finger occupies 137–219; that stretch reads GVEKEISVTR…CRGKGSVRKT (83 aa). The Zn(2+) site is built by C150, C153, C167, C170, C193, C196, C207, and C210. CXXCXGXG motif repeat units lie at residues 150–157, 167–174, 193–200, and 207–214; these read CEHCHGSG, CPTCSGSG, CDTCRGTG, and CSECRGKG.

It belongs to the DnaJ family. Homodimer. Zn(2+) serves as cofactor.

Its subcellular location is the cytoplasm. In terms of biological role, participates actively in the response to hyperosmotic and heat shock by preventing the aggregation of stress-denatured proteins and by disaggregating proteins, also in an autonomous, DnaK-independent fashion. Unfolded proteins bind initially to DnaJ; upon interaction with the DnaJ-bound protein, DnaK hydrolyzes its bound ATP, resulting in the formation of a stable complex. GrpE releases ADP from DnaK; ATP binding to DnaK triggers the release of the substrate protein, thus completing the reaction cycle. Several rounds of ATP-dependent interactions between DnaJ, DnaK and GrpE are required for fully efficient folding. Also involved, together with DnaK and GrpE, in the DNA replication of plasmids through activation of initiation proteins. This is Chaperone protein DnaJ from Clostridium beijerinckii (strain ATCC 51743 / NCIMB 8052) (Clostridium acetobutylicum).